We begin with the raw amino-acid sequence, 113 residues long: Dolichyl-diphosphooligosaccharide--protein glycosyltransferase subunit DAD1 (113 aa).

S2 carries the post-translational modification N-acetylserine. At 2–30 (SASVLSVISRFLEEYLSATPQRLKLLDAY) the chain is on the cytoplasmic side. The chain crosses the membrane as a helical span at residues 31–51 (LLYILLTGALQFGYCLLVGTF). Position 52 (P52) is a topological domain, lumenal. Residues 53-73 (FNSFLSGFISCVGSFILAVCL) traverse the membrane as a helical segment. Residues 74–92 (RIQINPQNKADFQGISPER) are Cytoplasmic-facing. The chain crosses the membrane as a helical span at residues 93–113 (AFADFLFASTILHLVVMNFVG).

The protein belongs to the DAD/OST2 family. Component of the oligosaccharyltransferase (OST) complex. OST exists in two different complex forms which contain common core subunits RPN1, RPN2, OST48, OST4, DAD1 and TMEM258, either STT3A or STT3B as catalytic subunits, and form-specific accessory subunits. STT3A complex assembly occurs through the formation of 3 subcomplexes. Subcomplex 1 contains RPN1 and TMEM258, subcomplex 2 contains the STT3A-specific subunits STT3A, DC2/OSTC, and KCP2 as well as the core subunit OST4, and subcomplex 3 contains RPN2, DAD1, and OST48. The STT3A complex can form stable complexes with the Sec61 complex or with both the Sec61 and TRAP complexes.

The protein localises to the endoplasmic reticulum membrane. It functions in the pathway protein modification; protein glycosylation. Its function is as follows. Subunit of the oligosaccharyl transferase (OST) complex that catalyzes the initial transfer of a defined glycan (Glc(3)Man(9)GlcNAc(2) in eukaryotes) from the lipid carrier dolichol-pyrophosphate to an asparagine residue within an Asn-X-Ser/Thr consensus motif in nascent polypeptide chains, the first step in protein N-glycosylation. N-glycosylation occurs cotranslationally and the complex associates with the Sec61 complex at the channel-forming translocon complex that mediates protein translocation across the endoplasmic reticulum (ER). All subunits are required for a maximal enzyme activity. In Bos taurus (Bovine), this protein is Dolichyl-diphosphooligosaccharide--protein glycosyltransferase subunit DAD1.